The sequence spans 522 residues: 56 kDa type-specific antigen (522 aa).

The signal sequence occupies residues 1-22 (MKKIMLIASAMSALSLPFSASA). Residues 67 to 87 (LTTMLPFGGTLAAGMTIAPGF) form a helical membrane-spanning segment. Residues 385-417 (AQEEGDDQSQVSCNDKKQQAVAEDSKAGSSKEG) are disordered. Residues 398–417 (NDKKQQAVAEDSKAGSSKEG) show a composition bias toward basic and acidic residues. Residues 470–490 (IGVVASGVLGVAINVADGVCV) traverse the membrane as a helical segment.

The protein resides in the cell membrane. May be an adherent factor for rickettsial adsorption to the host-cell surface and a determinant of virulence of individual rickettsial strain. It is the major outer membrane protein. This is 56 kDa type-specific antigen from Orientia tsutsugamushi (Rickettsia tsutsugamushi).